Reading from the N-terminus, the 378-residue chain is Dual-specificity RNA methyltransferase RlmN (378 aa).

Catalysis depends on Glu97, which acts as the Proton acceptor. Positions 103-341 constitute a Radical SAM core domain; sequence EGDRATLCVS…VMVRKTRGDD (239 aa). Cys110 and Cys346 are oxidised to a cystine. Positions 117, 121, and 124 each coordinate [4Fe-4S] cluster. S-adenosyl-L-methionine is bound by residues 171–172, Ser203, 225–227, and Asn303; these read GE and SLH. Residue Cys346 is the S-methylcysteine intermediate of the active site.

The protein belongs to the radical SAM superfamily. RlmN family. [4Fe-4S] cluster serves as cofactor.

Its subcellular location is the cytoplasm. It carries out the reaction adenosine(2503) in 23S rRNA + 2 reduced [2Fe-2S]-[ferredoxin] + 2 S-adenosyl-L-methionine = 2-methyladenosine(2503) in 23S rRNA + 5'-deoxyadenosine + L-methionine + 2 oxidized [2Fe-2S]-[ferredoxin] + S-adenosyl-L-homocysteine. The enzyme catalyses adenosine(37) in tRNA + 2 reduced [2Fe-2S]-[ferredoxin] + 2 S-adenosyl-L-methionine = 2-methyladenosine(37) in tRNA + 5'-deoxyadenosine + L-methionine + 2 oxidized [2Fe-2S]-[ferredoxin] + S-adenosyl-L-homocysteine. Specifically methylates position 2 of adenine 2503 in 23S rRNA and position 2 of adenine 37 in tRNAs. m2A2503 modification seems to play a crucial role in the proofreading step occurring at the peptidyl transferase center and thus would serve to optimize ribosomal fidelity. This is Dual-specificity RNA methyltransferase RlmN from Idiomarina loihiensis (strain ATCC BAA-735 / DSM 15497 / L2-TR).